The sequence spans 246 residues: Ubiquinone biosynthesis O-methyltransferase (246 aa).

Positions 44, 63, 84, and 128 each coordinate S-adenosyl-L-methionine.

It belongs to the methyltransferase superfamily. UbiG/COQ3 family.

The catalysed reaction is a 3-demethylubiquinol + S-adenosyl-L-methionine = a ubiquinol + S-adenosyl-L-homocysteine + H(+). The enzyme catalyses a 3-(all-trans-polyprenyl)benzene-1,2-diol + S-adenosyl-L-methionine = a 2-methoxy-6-(all-trans-polyprenyl)phenol + S-adenosyl-L-homocysteine + H(+). Its pathway is cofactor biosynthesis; ubiquinone biosynthesis. Functionally, O-methyltransferase that catalyzes the 2 O-methylation steps in the ubiquinone biosynthetic pathway. This Xylella fastidiosa (strain Temecula1 / ATCC 700964) protein is Ubiquinone biosynthesis O-methyltransferase.